Consider the following 243-residue polypeptide: Orotidine 5'-phosphate decarboxylase (243 aa).

Substrate-binding positions include Asp18, Lys39, 66–75 (DLKFHDIPAT), Thr130, Arg192, Gln201, Gly221, and Arg222. The Proton donor role is filled by Lys68.

The protein belongs to the OMP decarboxylase family. Type 1 subfamily. Homodimer.

It catalyses the reaction orotidine 5'-phosphate + H(+) = UMP + CO2. Its pathway is pyrimidine metabolism; UMP biosynthesis via de novo pathway; UMP from orotate: step 2/2. In terms of biological role, catalyzes the decarboxylation of orotidine 5'-monophosphate (OMP) to uridine 5'-monophosphate (UMP). This chain is Orotidine 5'-phosphate decarboxylase, found in Synechococcus sp. (strain CC9902).